The following is a 342-amino-acid chain: Phosphate acyltransferase (342 aa).

Belongs to the PlsX family. Homodimer. Probably interacts with PlsY.

Its subcellular location is the cytoplasm. The catalysed reaction is a fatty acyl-[ACP] + phosphate = an acyl phosphate + holo-[ACP]. The protein operates within lipid metabolism; phospholipid metabolism. Its function is as follows. Catalyzes the reversible formation of acyl-phosphate (acyl-PO(4)) from acyl-[acyl-carrier-protein] (acyl-ACP). This enzyme utilizes acyl-ACP as fatty acyl donor, but not acyl-CoA. This is Phosphate acyltransferase from Shewanella baltica (strain OS155 / ATCC BAA-1091).